A 304-amino-acid chain; its full sequence is 2-phospho-L-lactate transferase (304 aa).

D49 contributes to the 7,8-didemethyl-8-hydroxy-5-deazariboflavin binding site.

It belongs to the CofD family. In terms of assembly, homodimer. The cofactor is Mg(2+).

It catalyses the reaction (2S)-lactyl-2-diphospho-5'-guanosine + 7,8-didemethyl-8-hydroxy-5-deazariboflavin = oxidized coenzyme F420-0 + GMP + H(+). It functions in the pathway cofactor biosynthesis; coenzyme F420 biosynthesis. Functionally, catalyzes the transfer of the 2-phospholactate moiety from (2S)-lactyl-2-diphospho-5'-guanosine to 7,8-didemethyl-8-hydroxy-5-deazariboflavin (FO) with the formation of oxidized coenzyme F420-0 and GMP. This chain is 2-phospho-L-lactate transferase, found in Methanocorpusculum labreanum (strain ATCC 43576 / DSM 4855 / Z).